Consider the following 399-residue polypeptide: Argininosuccinate synthase (399 aa).

8–16 contacts ATP; sequence AYSGGLDTS. Y87 provides a ligand contact to L-citrulline. G117 lines the ATP pocket. 3 residues coordinate L-aspartate: T119, N123, and D124. Residue N123 participates in L-citrulline binding. L-citrulline-binding residues include R127, S175, E259, and Y271.

It belongs to the argininosuccinate synthase family. Type 1 subfamily. As to quaternary structure, homotetramer.

Its subcellular location is the cytoplasm. It carries out the reaction L-citrulline + L-aspartate + ATP = 2-(N(omega)-L-arginino)succinate + AMP + diphosphate + H(+). The protein operates within amino-acid biosynthesis; L-arginine biosynthesis; L-arginine from L-ornithine and carbamoyl phosphate: step 2/3. The chain is Argininosuccinate synthase from Corynebacterium diphtheriae (strain ATCC 700971 / NCTC 13129 / Biotype gravis).